Reading from the N-terminus, the 252-residue chain is Probable phosphatase Shewana3_2794 (252 aa).

Residues H8, H10, H16, H41, E74, H102, H132, D193, and H195 each coordinate Zn(2+).

Belongs to the PHP family. It depends on Zn(2+) as a cofactor.

This Shewanella sp. (strain ANA-3) protein is Probable phosphatase Shewana3_2794.